The sequence spans 192 residues: Adenylate kinase (192 aa).

10–15 (GAGKGT) lines the ATP pocket. The interval 30-56 (GTGGMLRALEPESGEQIHLRIDRGHFA) is NMP. AMP contacts are provided by residues T31, R36, 82-85 (GFPR), and Q89. Positions 123–133 (KRGETENRADD) are LID. R124 provides a ligand contact to ATP. AMP-binding residues include R130 and R141. Position 169 (D169) interacts with ATP.

The protein belongs to the adenylate kinase family. In terms of assembly, monomer.

The protein resides in the cytoplasm. The catalysed reaction is AMP + ATP = 2 ADP. Its pathway is purine metabolism; AMP biosynthesis via salvage pathway; AMP from ADP: step 1/1. Its function is as follows. Catalyzes the reversible transfer of the terminal phosphate group between ATP and AMP. Plays an important role in cellular energy homeostasis and in adenine nucleotide metabolism. The sequence is that of Adenylate kinase from Rhodopirellula baltica (strain DSM 10527 / NCIMB 13988 / SH1).